The following is a 322-amino-acid chain: Polyisoprenyl-teichoic acid--peptidoglycan teichoic acid transferase TagT (322 aa).

The Cytoplasmic segment spans residues 1 to 19 (MEERSQRRKKKRKLKKWVK). The chain crosses the membrane as a helical; Signal-anchor for type II membrane protein span at residues 20-40 (VVAGLMAFLVIAAGSVGAYAF). Residues 41 to 322 (VKLNNASKEA…KKELQNDLGV (282 aa)) lie on the Extracellular side of the membrane.

The protein belongs to the LytR/CpsA/Psr (LCP) family. As to quaternary structure, interacts with MreB.

The protein localises to the cell membrane. It participates in cell wall biogenesis. In terms of biological role, may catalyze the final step in cell wall teichoic acid biosynthesis, the transfer of the anionic cell wall polymers (APs) from their lipid-linked precursor to the cell wall peptidoglycan (PG). The polypeptide is Polyisoprenyl-teichoic acid--peptidoglycan teichoic acid transferase TagT (Bacillus subtilis (strain 168)).